We begin with the raw amino-acid sequence, 90 residues long: Small ribosomal subunit protein bS16 (90 aa).

Belongs to the bacterial ribosomal protein bS16 family.

The sequence is that of Small ribosomal subunit protein bS16 from Streptococcus sanguinis (strain SK36).